The sequence spans 177 residues: ATP synthase subunit delta (177 aa).

It belongs to the ATPase delta chain family. F-type ATPases have 2 components, F(1) - the catalytic core - and F(0) - the membrane proton channel. F(1) has five subunits: alpha(3), beta(3), gamma(1), delta(1), epsilon(1). F(0) has three main subunits: a(1), b(2) and c(10-14). The alpha and beta chains form an alternating ring which encloses part of the gamma chain. F(1) is attached to F(0) by a central stalk formed by the gamma and epsilon chains, while a peripheral stalk is formed by the delta and b chains.

The protein resides in the cell inner membrane. Functionally, f(1)F(0) ATP synthase produces ATP from ADP in the presence of a proton or sodium gradient. F-type ATPases consist of two structural domains, F(1) containing the extramembraneous catalytic core and F(0) containing the membrane proton channel, linked together by a central stalk and a peripheral stalk. During catalysis, ATP synthesis in the catalytic domain of F(1) is coupled via a rotary mechanism of the central stalk subunits to proton translocation. In terms of biological role, this protein is part of the stalk that links CF(0) to CF(1). It either transmits conformational changes from CF(0) to CF(1) or is implicated in proton conduction. This is ATP synthase subunit delta from Shewanella sediminis (strain HAW-EB3).